Reading from the N-terminus, the 530-residue chain is Ubiquitin carboxyl-terminal hydrolase 17-like protein 17 (530 aa).

Residues 80-375 (AGLQNMGNTC…QAYVLFYIQK (296 aa)) form the USP domain. Residue cysteine 89 is the Nucleophile of the active site. Histidine 334 acts as the Proton acceptor in catalysis. Basic and acidic residues-rich tracts occupy residues 382–392 (SESVSRGREPR) and 398–411 (DTDRRATQGELKRD). Disordered regions lie at residues 382–411 (SESVSRGREPRALGAEDTDRRATQGELKRD) and 477–530 (NHHP…LVCQ). Polar residues predominate over residues 493–505 (TPTHQESMNTGTL). Basic residues predominate over residues 510–524 (GRARRSKGKNKHSKR).

It belongs to the peptidase C19 family. USP17 subfamily.

Its subcellular location is the nucleus. It is found in the endoplasmic reticulum. It carries out the reaction Thiol-dependent hydrolysis of ester, thioester, amide, peptide and isopeptide bonds formed by the C-terminal Gly of ubiquitin (a 76-residue protein attached to proteins as an intracellular targeting signal).. In terms of biological role, deubiquitinating enzyme that removes conjugated ubiquitin from specific proteins to regulate different cellular processes that may include cell proliferation, progression through the cell cycle, apoptosis, cell migration, and the cellular response to viral infection. In Homo sapiens (Human), this protein is Ubiquitin carboxyl-terminal hydrolase 17-like protein 17 (USP17L17).